The primary structure comprises 108 residues: TYRO protein tyrosine kinase-binding protein (108 aa).

An N-terminal signal peptide occupies residues Met-1–Ala-25. The Extracellular segment spans residues Gln-26–Pro-36. A helical membrane pass occupies residues Gly-37 to Val-57. Asp-46 is a binding site for Ca(2+). At Tyr-58–Lys-108 the chain is on the cytoplasmic side. One can recognise an ITAM domain in the interval Arg-75 to Gln-103. 2 positions are modified to phosphotyrosine: Tyr-86 and Tyr-97.

It belongs to the TYROBP family. In terms of assembly, homodimer; disulfide-linked. Homotrimer; disulfide-linked. Homotetramer; disulfide-linked. Homotrimers and homotetramers form when low levels of partner receptors are available and is competitive with assembly with interacting receptors. They may represent alternative oligomerization states or may be intermediates in the receptor assembly process. Binding of a metal cation aids in homooligomerization through coordination of the metal ion by the subunits of the oligomer. Interacts with TREM1. Interacts with TREM2. Interacts with CLECSF5. Interacts with CD300LB and CD300C2. Interacts with CD300E. Interacts (via ITAM domain) with SYK (via SH2 domains); activates SYK mediating neutrophils and macrophages integrin-mediated activation. Interacts with KLRC2. Interacts with CD300H. Interacts with KLRD1. Interacts with SIGLEC1. Post-translationally, following ligand binding by associated receptors, tyrosine phosphorylated in the ITAM domain which leads to activation of additional tyrosine kinases and subsequent cell activation. Highly expressed in spleen, liver and thymus. Weakly expressed in lymph nodes. Expressed in peripheral blood leukocytes, granulocytes, macrophages, and monocytes. LPS does not increase expression in granulocytes.

The protein resides in the cell membrane. Its function is as follows. Adapter protein which non-covalently associates with activating receptors found on the surface of a variety of immune cells to mediate signaling and cell activation following ligand binding by the receptors. TYROBP is tyrosine-phosphorylated in the ITAM domain following ligand binding by the associated receptors which leads to activation of additional tyrosine kinases and subsequent cell activation. Also has an inhibitory role in some cells. Non-covalently associates with activating receptors of the CD300 family to mediate cell activation. Also mediates cell activation through association with activating receptors of the CD200R family. Required for neutrophil activation mediated by integrin. Required for the activation of myeloid cells mediated by the CLEC5A/MDL1 receptor. Associates with natural killer (NK) cell receptors such as the KLRD1/KLRC2 heterodimer to mediate NK cell activation. Associates with TREM1 to mediate activation of neutrophils and monocytes. Associates with TREM2 on monocyte-derived dendritic cells to mediate up-regulation of chemokine receptor CCR7 and dendritic cell maturation and survival. Association with TREM2 mediates cytokine-induced formation of multinucleated giant cells which are formed by the fusion of macrophages. Stabilizes the TREM2 C-terminal fragment (TREM2-CTF) produced by TREM2 ectodomain shedding which suppresses the release of pro-inflammatory cytokines. In microglia, required with TREM2 for phagocytosis of apoptotic neurons. Required with ITGAM/CD11B in microglia to control production of microglial superoxide ions which promote the neuronal apoptosis that occurs during brain development. Promotes pro-inflammatory responses in microglia following nerve injury which accelerates degeneration of injured neurons. Positively regulates the expression of the IRAK3/IRAK-M kinase and IL10 production by liver dendritic cells and inhibits their T cell allosimulatory ability. Negatively regulates B cell proliferation. Required for CSF1-mediated osteoclast cytoskeletal organization. Positively regulates multinucleation during osteoclast development. This is TYRO protein tyrosine kinase-binding protein from Sus scrofa (Pig).